The chain runs to 470 residues: 3-isopropylmalate dehydratase large subunit (470 aa).

Residues 294-307 (PDQNTGISGSTPNP) show a composition bias toward polar residues. Residues 294 to 313 (PDQNTGISGSTPNPSDAADD) are disordered. Residues cysteine 347, cysteine 407, and cysteine 410 each contribute to the [4Fe-4S] cluster site.

The protein belongs to the aconitase/IPM isomerase family. LeuC type 1 subfamily. In terms of assembly, heterodimer of LeuC and LeuD. It depends on [4Fe-4S] cluster as a cofactor.

It catalyses the reaction (2R,3S)-3-isopropylmalate = (2S)-2-isopropylmalate. It participates in amino-acid biosynthesis; L-leucine biosynthesis; L-leucine from 3-methyl-2-oxobutanoate: step 2/4. Catalyzes the isomerization between 2-isopropylmalate and 3-isopropylmalate, via the formation of 2-isopropylmaleate. This chain is 3-isopropylmalate dehydratase large subunit, found in Akkermansia muciniphila (strain ATCC BAA-835 / DSM 22959 / JCM 33894 / BCRC 81048 / CCUG 64013 / CIP 107961 / Muc).